Consider the following 350-residue polypeptide: MTVSNIGGEERLIILPDDYETSKTINTFTLPPPSNITSKPRIELFENINGKLYEIRSFQFGKGPSYSHEEDLANDKYHYTKENHPIKSTFIVNTSDPTDGYVFNSSKIHFCSLYDIAFSLIGFYYRNSVSADEQDYSNSSDTGENQKSNSKTNEKFLTVRDYHDFLTDNHDKNWENISLSRLKSGLAKVSETIEEAGDVYYKITSAMITQFLLGKVSKIVENFPPSIPTLKNAPTEIKQCYKVVMATNLLVSLIPRAAYHNLLTFSPTMDSGCLNPDIKASFIELENYETTNELQNAERELLMKSAMNVGLNSNGRVSLPVKKVTKKIVQNKKPKVAIGKGAIDGFFKRK.

A compositionally biased stretch (polar residues) spans 134 to 151 (QDYSNSSDTGENQKSNSK). A disordered region spans residues 134–153 (QDYSNSSDTGENQKSNSKTN).

Belongs to the RNase H2 subunit B family. Highly divergent. As to quaternary structure, the RNase 2 complex is a heterotrimer composed of the catalytic subunit RNH201 and of the non-catalytic subunits RNH202 and RNH203.

Its subcellular location is the nucleus. In terms of biological role, non catalytic subunit of RNase H2, an endonuclease that specifically degrades the RNA of RNA:DNA hybrids. Participates in DNA replication, possibly by mediating the removal of lagging-strand Okazaki fragment RNA primers during DNA replication. Mediates the excision of single ribonucleotides from DNA:RNA duplexes. This Saccharomyces cerevisiae (strain ATCC 204508 / S288c) (Baker's yeast) protein is Ribonuclease H2 subunit B (RNH202).